Consider the following 648-residue polypeptide: Macrolide export ATP-binding/permease protein MacB (648 aa).

The ABC transporter domain occupies 5-243 (LELCNVSRSY…QGVDAAVVNT (239 aa)). 41 to 48 (GVSGSGKS) lines the ATP pocket. The next 5 membrane-spanning stretches (helical) occupy residues 273–293 (LLTMLGIIIGIASVVSIVVVG), 417–437 (ANVVGEVVLAGNMPVIVIGVA), 523–543 (LFLTLVAVISLVVGGIGVMNI), 577–597 (VLVCLVGGALGISLSMFIAFM), and 611–631 (LTALASAFLCSTFTGILFGWL).

It belongs to the ABC transporter superfamily. Macrolide exporter (TC 3.A.1.122) family. As to quaternary structure, homodimer. Part of the tripartite efflux system MacAB-TolC, which is composed of an inner membrane transporter, MacB, a periplasmic membrane fusion protein, MacA, and an outer membrane component, TolC. The complex forms a large protein conduit and can translocate molecules across both the inner and outer membranes. Interacts with MacA.

It is found in the cell inner membrane. In terms of biological role, part of the tripartite efflux system MacAB-TolC. MacB is a non-canonical ABC transporter that contains transmembrane domains (TMD), which form a pore in the inner membrane, and an ATP-binding domain (NBD), which is responsible for energy generation. Confers resistance against macrolides. The protein is Macrolide export ATP-binding/permease protein MacB of Salmonella typhimurium (strain LT2 / SGSC1412 / ATCC 700720).